Reading from the N-terminus, the 479-residue chain is Cysteine protease effector 1 (479 aa).

The sequence is that of Cysteine protease effector 1 from Escherichia coli O1:K1:H7 (strain ATCC 11775 / DSM 30083 / JCM 1649 / NBRC 102203 / NCTC 9001 / U5/41).